A 384-amino-acid polypeptide reads, in one-letter code: MKQVSIIGGTGSIGTQTLDVIAANPDRFQLVSFAFGKNIEVALPWLNRLRPELVAVLDETVKEQLEAVLDYSPTVLVGEDGLIAVATADQADIVITAVVGAVGLRPTLAAIEAGKSIGLANKETLVTAGHLVMKKAREKGVAILPVDSEHAAIFQCLNGERRQDVRQIILTASGGSFRDQTREQLANVTVEQALNHPNWSMGAKITIDSATMMNKGFEVIEAHWLFDVTYDEIDVVLHRESIIHSMVEFNDGAVMAQLGMPDMREPIQYALTYPSRLEIKGGERLNLKQIGRLNFAEASFERYPLLRLAFEAGRAGGSMPSVLNAANEQAVDRFLKGEISFLEIEASVEAALQAHENIEDPSLDQILESDRWARAFVASLSLAN.

Positions 10, 11, 12, 13, 36, 37, 38, and 121 each coordinate NADPH. Residue Lys122 participates in 1-deoxy-D-xylulose 5-phosphate binding. Glu123 provides a ligand contact to NADPH. Asp147 contacts Mn(2+). 1-deoxy-D-xylulose 5-phosphate contacts are provided by Ser148, Glu149, Ser173, and His196. Position 149 (Glu149) interacts with Mn(2+). Gly202 is a binding site for NADPH. Residues Ser209, Asn214, Lys215, and Glu218 each contribute to the 1-deoxy-D-xylulose 5-phosphate site. Glu218 provides a ligand contact to Mn(2+).

It belongs to the DXR family. Requires Mg(2+) as cofactor. It depends on Mn(2+) as a cofactor.

The catalysed reaction is 2-C-methyl-D-erythritol 4-phosphate + NADP(+) = 1-deoxy-D-xylulose 5-phosphate + NADPH + H(+). It functions in the pathway isoprenoid biosynthesis; isopentenyl diphosphate biosynthesis via DXP pathway; isopentenyl diphosphate from 1-deoxy-D-xylulose 5-phosphate: step 1/6. Catalyzes the NADPH-dependent rearrangement and reduction of 1-deoxy-D-xylulose-5-phosphate (DXP) to 2-C-methyl-D-erythritol 4-phosphate (MEP). The protein is 1-deoxy-D-xylulose 5-phosphate reductoisomerase of Exiguobacterium sibiricum (strain DSM 17290 / CCUG 55495 / CIP 109462 / JCM 13490 / 255-15).